The following is a 281-amino-acid chain: Ribosomal RNA small subunit methyltransferase A (281 aa).

6 residues coordinate S-adenosyl-L-methionine: Asn-35, Leu-37, Gly-62, Glu-83, Asp-107, and Asn-125.

The protein belongs to the class I-like SAM-binding methyltransferase superfamily. rRNA adenine N(6)-methyltransferase family. RsmA subfamily.

It is found in the cytoplasm. It catalyses the reaction adenosine(1518)/adenosine(1519) in 16S rRNA + 4 S-adenosyl-L-methionine = N(6)-dimethyladenosine(1518)/N(6)-dimethyladenosine(1519) in 16S rRNA + 4 S-adenosyl-L-homocysteine + 4 H(+). Its function is as follows. Specifically dimethylates two adjacent adenosines (A1518 and A1519) in the loop of a conserved hairpin near the 3'-end of 16S rRNA in the 30S particle. May play a critical role in biogenesis of 30S subunits. The chain is Ribosomal RNA small subunit methyltransferase A from Deinococcus geothermalis (strain DSM 11300 / CIP 105573 / AG-3a).